A 669-amino-acid polypeptide reads, in one-letter code: Polyamine deacetylase HDAC10 (669 aa).

The segment at 1-323 (MGTALVYHED…VCMTVQTLLG (323 aa)) is histone deacetylase. Asp20 is a binding site for substrate. Residues 21–24 (PECE) carry the Substrate specificity motif. Catalysis depends on His135, which acts as the Proton donor/acceptor. Asp172, His174, and Asp265 together coordinate Zn(2+). Residue Tyr305 participates in substrate binding. Positions 361-373 (DVTAVPMSPSSHS) are enriched in polar residues. The tract at residues 361–387 (DVTAVPMSPSSHSPEGRPPPLLPGGPV) is disordered. Ser393 carries the phosphoserine modification.

It belongs to the histone deacetylase family. HD type 2 subfamily. Interacts with HDAC3. Interacts with HDAC2 and NCOR2/SMRT. Interacts with HSPA8/HSC70. Interacts with MSH2. In terms of tissue distribution, widely expressed with high levels in liver and kidney.

It localises to the cytoplasm. Its subcellular location is the nucleus. It catalyses the reaction N(8)-acetylspermidine + H2O = spermidine + acetate. The catalysed reaction is N-acetylputrescine + H2O = putrescine + acetate. It carries out the reaction N-acetylcadaverine + H2O = cadaverine + acetate. The enzyme catalyses N(6)-acetyl-L-lysyl-[protein] + H2O = L-lysyl-[protein] + acetate. In terms of biological role, polyamine deacetylase (PDAC), which acts preferentially on N(8)-acetylspermidine, and also on acetylcadaverine and acetylputrescine. Exhibits attenuated catalytic activity toward N(1),N(8)-diacetylspermidine and very low activity, if any, toward N(1)-acetylspermidine. Histone deacetylase activity has been observed in vitro. Has also been shown to be involved in MSH2 deacetylation. The physiological relevance of protein/histone deacetylase activity is unclear and could be very weak. May play a role in the promotion of late stages of autophagy, possibly autophagosome-lysosome fusion and/or lysosomal exocytosis in neuroblastoma cells. May play a role in homologous recombination. May promote DNA mismatch repair. The sequence is that of Polyamine deacetylase HDAC10 (HDAC10) from Homo sapiens (Human).